Here is a 137-residue protein sequence, read N- to C-terminus: UBAP1-MVB12-associated (UMA)-domain containing protein 1 (137 aa).

A disordered region spans residues methionine 1–alanine 72. Residues aspartate 32 to aspartate 44 are compositionally biased toward basic and acidic residues. Over residues proline 50–valine 63 the composition is skewed to polar residues. Residues leucine 86–leucine 134 form the UMA domain.

The protein is UBAP1-MVB12-associated (UMA)-domain containing protein 1 of Homo sapiens (Human).